Reading from the N-terminus, the 527-residue chain is MAAAGAVLPEQIAAMWEQVKAPVVVPLLRLSVAACLAMSVMLFVEKVYMSVVLVGVHLFGRRPDRRYRCDPIVAAGADNDDPELADANAAFPMVLIQIPMYNEREVYKLSIGAACGLSWPSDRVIVQVLDDSTDPVIKEMVQVECKRWESKGVRIKYEIRDNRVGYKAGALREGMKHGYVRDCDYVAIFDADFQPDPDFLARTIPFLVHNPDIALVQARWKFVNANECLMTRMQEMSLDYHFKVEQEVGSSTHAFFGFNGTAGVWRISAMNEAGGWKDRTTVEDMDLAVRAGLKGWKFVYLGDLMVKSELPSTFKAFRYQQHRWSCGPANLFRKMLVEIATNKKVTLWKKIYVIYNFFLVRKIIGHIVTFVFYCLVVPATVLIPEVEIPRWGYVYLPSIVTILNSIGTPRSLHLLIFWVLFENVMSLHRTKATLIGLLETGRVNEWVVTEKLGDALKLKLPGKAFRRPRMRIGDRVNALELGFSAYLSFCGCYDIAYGKGYYSLFLFLQSITFFIIGVGYVGTIVPH.

Residues 37 to 59 traverse the membrane as a helical segment; that stretch reads AMSVMLFVEKVYMSVVLVGVHLF. Residue aspartate 131 is part of the active site. Residues aspartate 190 and aspartate 192 each coordinate substrate. Aspartate 284 is a catalytic residue. 4 helical membrane passes run 363–383, 399–419, 478–498, and 505–525; these read IIGH…TVLI, IVTI…IFWV, ALEL…IAYG, and FLFL…GTIV.

Belongs to the glycosyltransferase 2 family. Plant cellulose synthase-like A subfamily.

Its subcellular location is the golgi apparatus membrane. It catalyses the reaction GDP-mannose + (glucomannan)n = GDP + (glucomannan)n+1.. Functionally, probable mannan synthase which consists of a 4-beta-mannosyltransferase activity on mannan using GDP-mannose. The beta-1,4-mannan product is the backbone for galactomannan synthesis by galactomannan galactosyltransferase. Galactomannan is a noncellulosic polysaccharides of plant cell wall. The chain is Probable glucomannan 4-beta-mannosyltransferase 9 from Oryza sativa subsp. japonica (Rice).